A 341-amino-acid polypeptide reads, in one-letter code: Outer membrane protein assembly factor BamD (341 aa).

The first 17 residues, 1–17 (MQVKHLLLIAILALTAA), serve as a signal peptide directing secretion. Residue Cys-18 is the site of N-palmitoyl cysteine attachment. Residue Cys-18 is the site of S-diacylglycerol cysteine attachment. Residues 289-316 (DVIKQYEDAEREIPAELKPENQDHSADD) show a composition bias toward basic and acidic residues. The disordered stretch occupies residues 289-330 (DVIKQYEDAEREIPAELKPENQDHSADDEKPESDDDEDSGRS). A compositionally biased stretch (acidic residues) spans 317-326 (EKPESDDDED).

It belongs to the BamD family. In terms of assembly, part of the Bam complex.

The protein localises to the cell outer membrane. Part of the outer membrane protein assembly complex, which is involved in assembly and insertion of beta-barrel proteins into the outer membrane. The polypeptide is Outer membrane protein assembly factor BamD (Pseudomonas aeruginosa (strain ATCC 15692 / DSM 22644 / CIP 104116 / JCM 14847 / LMG 12228 / 1C / PRS 101 / PAO1)).